We begin with the raw amino-acid sequence, 377 residues long: Pyruvate dehydrogenase E1 component subunit alpha, mitochondrial (377 aa).

The N-terminal 26 residues, 1-26, are a transit peptide targeting the mitochondrion; sequence MLSNFLKVNSKALGHIRTFASKSGEI. 10 residues coordinate pyruvate: H83, Y109, R110, G156, V158, D187, G188, A189, N216, and Y218. The thiamine diphosphate site is built by Y109, R110, G156, V158, D187, G188, A189, and N216. D187 provides a ligand contact to Mg(2+). Residues N216 and Y218 each contribute to the Mg(2+) site. H283 contributes to the thiamine diphosphate binding site.

As to quaternary structure, tetramer of 2 alpha and 2 beta subunits. It depends on thiamine diphosphate as a cofactor. Requires Mg(2+) as cofactor.

Its subcellular location is the mitochondrion matrix. It carries out the reaction N(6)-[(R)-lipoyl]-L-lysyl-[protein] + pyruvate + H(+) = N(6)-[(R)-S(8)-acetyldihydrolipoyl]-L-lysyl-[protein] + CO2. With respect to regulation, E1 activity is regulated by phosphorylation (inactivation) and dephosphorylation (activation) of the alpha subunit. The pyruvate dehydrogenase complex catalyzes the overall conversion of pyruvate to acetyl-CoA and CO(2). It contains multiple copies of three enzymatic components: pyruvate dehydrogenase (E1), dihydrolipoamide acetyltransferase (E2) and lipoamide dehydrogenase (E3). This is Pyruvate dehydrogenase E1 component subunit alpha, mitochondrial (pdhA) from Dictyostelium discoideum (Social amoeba).